We begin with the raw amino-acid sequence, 467 residues long: 3-isopropylmalate dehydratase large subunit (467 aa).

[4Fe-4S] cluster is bound by residues Cys-349, Cys-408, and Cys-411.

This sequence belongs to the aconitase/IPM isomerase family. LeuC type 1 subfamily. Heterodimer of LeuC and LeuD. It depends on [4Fe-4S] cluster as a cofactor.

The enzyme catalyses (2R,3S)-3-isopropylmalate = (2S)-2-isopropylmalate. Its pathway is amino-acid biosynthesis; L-leucine biosynthesis; L-leucine from 3-methyl-2-oxobutanoate: step 2/4. Its function is as follows. Catalyzes the isomerization between 2-isopropylmalate and 3-isopropylmalate, via the formation of 2-isopropylmaleate. This chain is 3-isopropylmalate dehydratase large subunit, found in Dinoroseobacter shibae (strain DSM 16493 / NCIMB 14021 / DFL 12).